The following is a 1090-amino-acid chain: MSSSDDLDEDELLQMALKEQSQRDVTYQKPPSANSRKPVTNLVQQPRRQKRAAAPPSKGGAKASRKPSMDEDDESEVELLSISSGDEDEGNDRGRGGGGDGGGGRGRGGSGKERGRARKEDDRAWDGVEPDCWKRVNEAELARKVRDMRESRTAPSVTQNLDRKVSGADKKVVLTSLQSFPRGMECIDPLKLGIIDNKTLRLITESSESLSKAEKVDNALREKLVYTSDHFDPKLFISRIHQETSAADLESGALALKSDLKGRNLQRKQLVKDNFDCFVSCKTTIDDIESKLKRIEDDPDGSGTTHLFNCMKSVTSRANRAFEPLFERQAQAEKIRSVQGMLQRFRTLFNLPSIIRSSISKGEYDLAVREYKKAKSIALPSHVNLLKRVLEEVEKVMQEFKGTLYRSMEDPKIDFTSLENTVRLLLELEPESDPVWHYLNVQNHRIHGMLEKCTFDHEARMEILRNQVHERALSDAKWRQIQQNGVQLSDDTSSMEDNQVQVDQPLEESARREKDALRGRYIKILTAVIVYHLPTFWKTALSVFTGKFAKSSQVNDTSASKAEEKAEEARYSSHSLEEIAGMIRNTISVYEAKVQSTFHDFDESYILHPYMSDTIKEVSKACQAFEAKESAPHSAVMALRKVKVEITKIYIQRLCSWMRASTEEISKEETWIPVSILERNRSPYSISYLPLAFRSIIVSGMEQINMMILSLKGEAARSEDMFAHIEEILISVRLAFLNCFLDFAAHLEQIGADLSQRTTKRESWQNGYSNDHQEEQSINAPESVVDPHRQLLMILSNIGYCKDELASELYNKYKYTWLQSRRNDEDISDLQDLMMSFSGLGEKVLEHYTFAKANLIRTAATNYLLDSGIQWGAAPPVKGIRDAAVELLHTLVAVHAEVFAGAKPLLDKILGTLVEGLIDTFLSLLDENRSDDLSSIDANGFCQLMLELEYFETILKPYLTVDATESLKSLQGAVLEKAIESISETVENNPGGHQRKPTRGSEDAISDDKQSSVSPDDLLALAQQCTSGMLQLELEKTRLNSACFIETIPLDPVPPVAKAAYSRTSTDSPSRNYRESQPMGSPVQARPRRR.

The span at 1–12 (MSSSDDLDEDEL) shows a compositional bias: acidic residues. Residues 1 to 126 (MSSSDDLDED…ARKEDDRAWD (126 aa)) form a disordered region. Positions 23–46 (RDVTYQKPPSANSRKPVTNLVQQP) are enriched in polar residues. A compositionally biased stretch (low complexity) spans 52–62 (AAAPPSKGGAK). Residues 96–109 (GGGGDGGGGRGRGG) show a composition bias toward gly residues. Positions 110–126 (SGKERGRARKEDDRAWD) are enriched in basic and acidic residues. Serine 179 is modified (phosphoserine). Polar residues predominate over residues 486 to 502 (VQLSDDTSSMEDNQVQV). 3 disordered regions span residues 486–511 (VQLS…ESAR), 984–1013 (ETVE…QSSV), and 1055–1090 (PVAK…PRRR). The span at 999 to 1010 (RGSEDAISDDKQ) shows a compositional bias: basic and acidic residues. The span at 1062–1071 (SRTSTDSPSR) shows a compositional bias: polar residues.

The protein belongs to the SEC5 family. The exocyst complex is composed of SEC3, SEC5, SEC6, SEC8, SEC10, EXO70A1 and EXO84B.

Its function is as follows. Component of the exocyst complex involved in the docking of exocytic vesicles with fusion sites on the plasma membrane during regulated or polarized secretion. Involved in polarized cell growth and organ morphogenesis. During cytokinesis, involved in cell plate initiation, cell plate maturation and formation of new primary cell wall. This chain is Exocyst complex component SEC5B (SEC5B), found in Arabidopsis thaliana (Mouse-ear cress).